The sequence spans 908 residues: MSDDEAFDIAGSLALKDEDDYSDSSSNEGEDFQDEIIPSDDEKEPSPPPKKKSKPNPQAFPSLELSDNEGNNDDDDDDDSKINSYFINNNPTAKKAKAGSFASFGLTKFILANIAKKGYKQPTPIQRKTIPLIMEGRDVVGMARTGSGKTAAFVLPLIERLKSRQPGGVRAVILSPSRELALQTYKQVKEFSHGTNLQSIVLIGGDSLEEDFSKMMTKPDIIVCTPGRFLHLKVEMQYDLMTVQYIVFDEADRLFEMGFAEQLNELLASLPSNRQSLLFSATLPRSLVDFAKAGLTNPVLVRLDAESKISDQLQMAYFTTKKNEREANLLYILQEVIKMPLGSEEQIKKLKDMDKRKIDSDSEDDDDDEERKKGKKRYKFKKERLPPANRLPSPHSTIVFVPTKHHVEYVTKLLRDAGYLVSYIYGTLDQHARKNQLYQFRVGLTNVLVVTDVAARGIDIPVLANVINFTLPASSKIFIHRVGRTARAGNKGWAYSIVNEKELPYLLDLELFLGKKILLTSMHEAKVEMLKKSSTGTFIPPVVNYTERLVLGSVPRVDLETFQELYENLLRNNYEIKVLKDVAAKGEKLYHRTRQPASQESLKRSKEIIESSWDDQHLLFGENLEKQKDAFLAKLQDRNSKQTVFELKGSDESLVEFMNRRRRQLAPIQRKAKERKELLAKERLAGLTHGIEDEILRADGENGYGVDEDELQEAFEDADKKKSFRDPQFFLSHYAPASVIQDQQLSLSTSFANEAQAATFDLDNDDKIQTNKQVMRWDKKKGKYINSKSTDKKYIISENGTKIPASFRSGKFDEWRKQRNLKPTSTVEDDSNKRFKHKQQRAPKLPDKFRDDYHKQKKKVEKAIESGVNVKGFHTPQQEIKSTEQIRKARLLKEKRKAKNARPSKKRK.

The disordered stretch occupies residues 1–84 (MSDDEAFDIA…DDDDDSKINS (84 aa)). Acidic residues-rich tracts occupy residues 17 to 43 (DEDDYSDSSSNEGEDFQDEIIPSDDEK) and 66 to 79 (SDNEGNNDDDDDDD). The Q motif signature appears at 99–127 (GSFASFGLTKFILANIAKKGYKQPTPIQR). The Helicase ATP-binding domain occupies 130 to 301 (IPLIMEGRDV…KAGLTNPVLV (172 aa)). 143 to 150 (ARTGSGKT) contacts ATP. The DEAD box motif lies at 249–252 (DEAD). 2 disordered regions span residues 352–389 (DMDKRKIDSDSEDDDDDEERKKGKKRYKFKKERLPPAN) and 821–885 (LKPT…STEQ). A compositionally biased stretch (basic residues) spans 373-382 (KGKKRYKFKK). The region spanning 373 to 533 (KGKKRYKFKK…EAKVEMLKKS (161 aa)) is the Helicase C-terminal domain. Residues 844–854 (KLPDKFRDDYH) show a composition bias toward basic and acidic residues.

Belongs to the DEAD box helicase family. DDX54/DBP10 subfamily.

The protein localises to the nucleus. The protein resides in the nucleolus. The catalysed reaction is ATP + H2O = ADP + phosphate + H(+). Functionally, ATP-binding RNA helicase involved in the biogenesis of 60S ribosomal subunits and is required for the normal formation of 25S and 5.8S rRNAs. The chain is ATP-dependent RNA helicase DBP10 (DBP10) from Candida albicans (strain SC5314 / ATCC MYA-2876) (Yeast).